The sequence spans 307 residues: D-alanine--D-alanine ligase (307 aa).

The 201-residue stretch at 101-301 (KTVMRAAGVD…FGELVRWMVE (201 aa)) folds into the ATP-grasp domain. ATP is bound at residue 127–182 (PLPPPYVVKPIAEGSSVGVIIVRDGRSHPPQILASEEWTFGEQVLAEPYIAGRELT). 3 residues coordinate Mg(2+): Asp251, Glu268, and Asn270.

The protein belongs to the D-alanine--D-alanine ligase family. Requires Mg(2+) as cofactor. Mn(2+) is required as a cofactor.

The protein localises to the cytoplasm. It carries out the reaction 2 D-alanine + ATP = D-alanyl-D-alanine + ADP + phosphate + H(+). It participates in cell wall biogenesis; peptidoglycan biosynthesis. Its function is as follows. Cell wall formation. The polypeptide is D-alanine--D-alanine ligase (Methylobacterium radiotolerans (strain ATCC 27329 / DSM 1819 / JCM 2831 / NBRC 15690 / NCIMB 10815 / 0-1)).